The primary structure comprises 276 residues: Undecaprenyl-diphosphatase (276 aa).

The next 6 helical transmembrane spans lie at R43–F63, L85–I105, L109–A129, A183–S203, V218–L238, and I254–A274.

The protein belongs to the UppP family.

The protein resides in the cell inner membrane. It carries out the reaction di-trans,octa-cis-undecaprenyl diphosphate + H2O = di-trans,octa-cis-undecaprenyl phosphate + phosphate + H(+). Functionally, catalyzes the dephosphorylation of undecaprenyl diphosphate (UPP). Confers resistance to bacitracin. In Pseudomonas syringae pv. tomato (strain ATCC BAA-871 / DC3000), this protein is Undecaprenyl-diphosphatase.